The chain runs to 310 residues: Vomeronasal type-1 receptor 44 (310 aa).

Over 1–20 (MNKANLLHIDTNIKITLLAE) the chain is Extracellular. Residues 21–41 (VSVGISANSILFIAYLCMLLG) form a helical membrane-spanning segment. At 42–50 (ENRHKPIDL) the chain is on the cytoplasmic side. Residues 51–71 (YIAFLSLTQLMLLITMGLIAV) form a helical membrane-spanning segment. At 72 to 93 (DMFMPWGRWDSTTCQSLIYLHR) the chain is on the extracellular side. A disulfide bridge connects residues C85 and C172. The chain crosses the membrane as a helical span at residues 94–114 (FLRGLTLCATCLLNVLWTITL). At 115–131 (SSRNSCLAKFKHKYPHH) the chain is on the cytoplasmic side. The chain crosses the membrane as a helical span at residues 132–152 (ISGAFLFLCVLYMSFSSHFLV). Residues 153 to 190 (SMTVTPNLTSENFMYVTQSCSLLPMSYSRTSMFSTPVA) are Extracellular-facing. N-linked (GlcNAc...) asparagine glycosylation occurs at N159. The chain crosses the membrane as a helical span at residues 191-211 (IRETFLISLMALSSGYMVALL). Residues 212–238 (WRHKKQAQHLRSTSLSSKASPEQRATR) lie on the Cytoplasmic side of the membrane. A helical membrane pass occupies residues 239-259 (TILLLMSFFVVFYILDTVIFH). At 260 to 268 (SRMKFKDGS) the chain is on the extracellular side. Residues 269 to 289 (ILYCFQIIVSHSYVTVSPFVF) traverse the membrane as a helical segment. Over 290-310 (ICTEKHIIKFLRSMCGRIANI) the chain is Cytoplasmic.

This sequence belongs to the G-protein coupled receptor 1 family.

It is found in the cell membrane. Putative pheromone receptor implicated in the regulation of social and reproductive behavior. This chain is Vomeronasal type-1 receptor 44 (Vmn1r44), found in Mus musculus (Mouse).